A 390-amino-acid chain; its full sequence is Copper-containing nitrite reductase (390 aa).

Positions 1–18 (MKRQALAAMIASLFALAA) are cleaved as a signal peptide. Cys19 carries N-palmitoyl cysteine lipidation. Cys19 carries the S-diacylglycerol cysteine lipid modification. A disordered region spans residues 30 to 51 (ETPAAAAEAASSAAQTAAETPS). 2 consecutive Plastocyanin-like domains span residues 101–195 (WTFD…ILVE) and 245–346 (GHVG…LKVE). Residues His134, His139, His174, Cys175, His183, and Met188 each contribute to the Cu cation site. Substrate is bound at residue His139. Residue His280 participates in substrate binding. His329 is a binding site for Cu cation. The interval 367 to 390 (GAAPAASAPAASAPAASASEKSVY) is disordered. Residues 368–390 (AAPAASAPAASAPAASASEKSVY) are compositionally biased toward low complexity. Repeat copies occupy residues 371 to 375 (AASAP), 376 to 380 (AASAP), and 381 to 385 (AASAS). The interval 371–385 (AASAPAASAPAASAS) is 3 X 5 AA tandem repeats of A-A-S-A-P.

The protein belongs to the multicopper oxidase family. In terms of assembly, homotrimer. The cofactor is Cu(+). It depends on Cu(2+) as a cofactor.

Its subcellular location is the cell outer membrane. The enzyme catalyses nitric oxide + Fe(III)-[cytochrome c] + H2O = Fe(II)-[cytochrome c] + nitrite + 2 H(+). Its function is as follows. Catalyzes the reduction of nitrite to nitric oxide (NO). It could be essential for growth and survival in oxygen-depleted environments. This is Copper-containing nitrite reductase (aniA) from Neisseria meningitidis serogroup B (strain ATCC BAA-335 / MC58).